A 98-amino-acid chain; its full sequence is Large ribosomal subunit protein uL23 (98 aa).

This sequence belongs to the universal ribosomal protein uL23 family. Part of the 50S ribosomal subunit. Contacts protein L29, and trigger factor when it is bound to the ribosome.

Functionally, one of the early assembly proteins it binds 23S rRNA. One of the proteins that surrounds the polypeptide exit tunnel on the outside of the ribosome. Forms the main docking site for trigger factor binding to the ribosome. This is Large ribosomal subunit protein uL23 from Chromohalobacter salexigens (strain ATCC BAA-138 / DSM 3043 / CIP 106854 / NCIMB 13768 / 1H11).